The primary structure comprises 670 residues: Rhophilin-1 (670 aa).

The segment at 1–20 is disordered; that stretch reads MILEERPDGAGAGEESPRLQ. In terms of domain architecture, REM-1 spans 23–97; that stretch reads DSLTQIQCGQ…LEELSGGVDP (75 aa). Ser24 is subject to Phosphoserine. A BRO1 domain is found at 108-457; the sequence is PMIPLGLKET…LAKYAELDRE (350 aa). One can recognise a PDZ domain in the interval 513–592; it reads PVHLTRGEGG…ASLQVVSLLP (80 aa). The interval 616–670 is disordered; that stretch reads QREHGCKTPASTWASPRPLLNWSRKAQQGKTGGCPQPCAPVKPAPPSSLKHPGWP. A compositionally biased stretch (pro residues) spans 652 to 661; it reads PCAPVKPAPP.

It belongs to the RHPN family. In terms of assembly, binds specifically to GTP-Rho. Interacts with ROPN1.

Has no enzymatic activity. May serve as a target for Rho, and interact with some cytoskeletal component upon Rho binding or relay a Rho signal to other molecules. The protein is Rhophilin-1 of Homo sapiens (Human).